A 236-amino-acid chain; its full sequence is Leucyl/phenylalanyl-tRNA--protein transferase (236 aa).

This sequence belongs to the L/F-transferase family.

It is found in the cytoplasm. The catalysed reaction is N-terminal L-lysyl-[protein] + L-leucyl-tRNA(Leu) = N-terminal L-leucyl-L-lysyl-[protein] + tRNA(Leu) + H(+). It catalyses the reaction N-terminal L-arginyl-[protein] + L-leucyl-tRNA(Leu) = N-terminal L-leucyl-L-arginyl-[protein] + tRNA(Leu) + H(+). The enzyme catalyses L-phenylalanyl-tRNA(Phe) + an N-terminal L-alpha-aminoacyl-[protein] = an N-terminal L-phenylalanyl-L-alpha-aminoacyl-[protein] + tRNA(Phe). In terms of biological role, functions in the N-end rule pathway of protein degradation where it conjugates Leu, Phe and, less efficiently, Met from aminoacyl-tRNAs to the N-termini of proteins containing an N-terminal arginine or lysine. The protein is Leucyl/phenylalanyl-tRNA--protein transferase of Shewanella halifaxensis (strain HAW-EB4).